The sequence spans 112 residues: MKKIEAMIKPFKLDDVRESLSDIGISGMTITEVRGFGRQKGHTELYRGAEYMVDFLPKVKLEVVVPDELVDQCIEAIIETAQTGKIGDGKIFVYHVERAIRIRTGEENEDAI.

An O-UMP-tyrosine modification is found at Tyr-51.

Belongs to the P(II) protein family. As to quaternary structure, homotrimer. Post-translationally, uridylylated/deuridylylated by GlnD.

Its function is as follows. P-II indirectly controls the transcription of the glutamine synthetase gene (GlnA). P-II prevents NR-II-catalyzed conversion of NR-I to NR-I-phosphate, the transcriptional activator of GlnA. When P-II is uridylylated to P-II-UMP, these events are reversed. When the ratio of Gln to 2-ketoglutarate decreases, P-II is uridylylated to P-II-UMP, which causes the deadenylation of glutamine synthetase by GlnE, so activating the enzyme. The polypeptide is Nitrogen regulatory protein P-II (glnB) (Haemophilus influenzae (strain ATCC 51907 / DSM 11121 / KW20 / Rd)).